The primary structure comprises 260 residues: Snake venom serine protease 2 (260 aa).

An N-terminal signal peptide occupies residues 1–18; sequence MVLIRVLANLLILQLFYA. Residues 19–24 constitute a propeptide that is removed on maturation; that stretch reads QKSSEL. Residues 25–251 form the Peptidase S1 domain; it reads IIGGDECNIN…HLDWIKSIIA (227 aa). 6 disulfides stabilise this stretch: C31–C165, C52–C68, C100–C258, C144–C212, C176–C191, and C202–C227. Residues N123 and N124 are each glycosylated (N-linked (GlcNAc...) asparagine).

This sequence belongs to the peptidase S1 family. Snake venom subfamily. Monomer. As to expression, expressed by the venom gland.

Its subcellular location is the secreted. In terms of biological role, snake venom serine protease that may act in the hemostasis system of the prey. The sequence is that of Snake venom serine protease 2 (TLF2) from Protobothrops flavoviridis (Habu).